The chain runs to 594 residues: Protein FAM200C (594 aa).

The chain is Protein FAM200C from Homo sapiens (Human).